Here is a 249-residue protein sequence, read N- to C-terminus: Protein LicA homolog (249 aa).

This sequence belongs to the peptidase S49 family.

The protein is Protein LicA homolog (licA) of Metamycoplasma hominis (strain ATCC 23114 / DSM 25592 / NBRC 14850 / NCTC 10111 / PG21) (Mycoplasma hominis).